A 466-amino-acid polypeptide reads, in one-letter code: Transcription factor SOX-10 (466 aa).

Disordered regions lie at residues 1 to 67 (MAEE…DDDK), 160 to 200 (LRMQ…QGGA), 213 to 275 (DHRH…DFGN), 344 to 375 (TVSPPGVDAKAQVKTETTGPQGPPHYTDQPST), and 433 to 466 (RPLYTAISDPSPSGPQSHSPTHWEQPVYTTLSRP). Positions 23-32 (LSPGSAPSLG) are enriched in low complexity. The residue at position 24 (S24) is a Phosphoserine. Positions 62–102 (EADDDKFPVCIREAVSQVLSGYDWTLVPMPVRVNGASKSKP) are dimerization (DIM). Residues 104–172 (VKRPMNAFMV…QHKKDHPDYK (69 aa)) constitute a DNA-binding region (HMG box). Residues 160–173 (LRMQHKKDHPDYKY) are compositionally biased toward basic and acidic residues. Residues 183 to 200 (AAQGEAECPGGEAEQGGA) are compositionally biased toward low complexity. Residues 228-310 (PEHPSGQSHG…LPPNGHPGHV (83 aa)) are transactivation domain (TAM). Residues 254–271 (ADPKRDGRSLGEGGKPHI) are compositionally biased toward basic and acidic residues. Residues 353–466 (KAQVKTETTG…QPVYTTLSRP (114 aa)) form a transactivation domain (TAC) region. Residues 440–466 (SDPSPSGPQSHSPTHWEQPVYTTLSRP) show a composition bias toward polar residues.

Monomer. Interacts with Armcx3 at the mitochondrial outer membrane surface. Interacts with PAX3. Expressed in oligodendroglia of the spinal tube (at protein level).

The protein localises to the cytoplasm. Its subcellular location is the nucleus. The protein resides in the mitochondrion outer membrane. Its function is as follows. Transcription factor that plays a central role in developing and mature glia. Specifically activates expression of myelin genes, during oligodendrocyte (OL) maturation, such as DUSP15 and MYRF, thereby playing a central role in oligodendrocyte maturation and CNS myelination. Once induced, MYRF cooperates with SOX10 to implement the myelination program. Transcriptional activator of MITF, acting synergistically with PAX3. Transcriptional activator of MBP, via binding to the gene promoter. The protein is Transcription factor SOX-10 (Sox10) of Mus musculus (Mouse).